The following is a 131-amino-acid chain: Large ribosomal subunit protein bL17 (131 aa).

Belongs to the bacterial ribosomal protein bL17 family. In terms of assembly, part of the 50S ribosomal subunit. Contacts protein L32.

This chain is Large ribosomal subunit protein bL17, found in Methylacidiphilum infernorum (isolate V4) (Methylokorus infernorum (strain V4)).